The sequence spans 212 residues: MLSYYEHNTAFQTNNCNSGSNAATTYNSDANNDTIMNKRKNDHFEFDTHTFYQRSKRTKRDSVSTKFSVGSGCANLNNNNNNIIINNNNNNNNNNNNHNHNNSNNTATYNNIHYKKNIEICPLKPVSMHHTMNSRLLNESEFYSETEEYMIHGYFGNTNRDITGTSPTGSASIIQHQYHLLPSQSIIASQAPGTAMAALTNNNIANDYMDID.

Low complexity predominate over residues 87 to 105 (NNNNNNNNNNNHNHNNSNN). The disordered stretch occupies residues 87–107 (NNNNNNNNNNNHNHNNSNNTA).

This is an uncharacterized protein from Saccharomyces cerevisiae (strain ATCC 204508 / S288c) (Baker's yeast).